The following is a 342-amino-acid chain: Flagellar P-ring protein (342 aa).

The first 19 residues, 1–19 (MKRVFLWLIFVLAFHKLLA), serve as a signal peptide directing secretion.

Belongs to the FlgI family. In terms of assembly, the basal body constitutes a major portion of the flagellar organelle and consists of four rings (L,P,S, and M) mounted on a central rod.

Its subcellular location is the periplasm. The protein resides in the bacterial flagellum basal body. Functionally, assembles around the rod to form the L-ring and probably protects the motor/basal body from shearing forces during rotation. This is Flagellar P-ring protein from Helicobacter pylori (strain G27).